The primary structure comprises 369 residues: Anhydro-N-acetylmuramic acid kinase (369 aa).

Residue 12 to 19 (GTSLDGVD) coordinates ATP.

The protein belongs to the anhydro-N-acetylmuramic acid kinase family.

The enzyme catalyses 1,6-anhydro-N-acetyl-beta-muramate + ATP + H2O = N-acetyl-D-muramate 6-phosphate + ADP + H(+). Its pathway is amino-sugar metabolism; 1,6-anhydro-N-acetylmuramate degradation. It functions in the pathway cell wall biogenesis; peptidoglycan recycling. Functionally, catalyzes the specific phosphorylation of 1,6-anhydro-N-acetylmuramic acid (anhMurNAc) with the simultaneous cleavage of the 1,6-anhydro ring, generating MurNAc-6-P. Is required for the utilization of anhMurNAc either imported from the medium or derived from its own cell wall murein, and thus plays a role in cell wall recycling. This is Anhydro-N-acetylmuramic acid kinase from Shigella boydii serotype 4 (strain Sb227).